The chain runs to 418 residues: Outer membrane protein assembly factor BamB (418 aa).

The N-terminal stretch at 1-28 (MFHNTCGRKGRFARAMGMALAISVTLSG) is a signal peptide. Residue Cys29 is the site of N-palmitoyl cysteine attachment. Cys29 carries S-diacylglycerol cysteine lipidation.

It belongs to the BamB family. As to quaternary structure, part of the Bam complex.

It localises to the cell outer membrane. Its function is as follows. Part of the outer membrane protein assembly complex, which is involved in assembly and insertion of beta-barrel proteins into the outer membrane. This chain is Outer membrane protein assembly factor BamB, found in Alteromonas naphthalenivorans.